The chain runs to 159 residues: Cytochrome c-type biogenesis protein CcmE (159 aa).

Residues 1 to 8 (MNIRRKNR) lie on the Cytoplasmic side of the membrane. A helical; Signal-anchor for type II membrane protein transmembrane segment spans residues 9-29 (LWIACAVLAGLALTIGLVLYA). Residues 30–159 (LRSNIDLFYT…PASVYKDPAS (130 aa)) are Periplasmic-facing. Heme is bound by residues His130 and Tyr134. Basic and acidic residues predominate over residues 132–147 (ENYTPPEVEKAMEANH). The segment at 132–159 (ENYTPPEVEKAMEANHRRPASVYKDPAS) is disordered.

This sequence belongs to the CcmE/CycJ family.

It localises to the cell inner membrane. Heme chaperone required for the biogenesis of c-type cytochromes. Transiently binds heme delivered by CcmC and transfers the heme to apo-cytochromes in a process facilitated by CcmF and CcmH. In Shigella sonnei (strain Ss046), this protein is Cytochrome c-type biogenesis protein CcmE.